Here is a 276-residue protein sequence, read N- to C-terminus: Formamidopyrimidine-DNA glycosylase (276 aa).

Residue Pro-2 is the Schiff-base intermediate with DNA of the active site. The Proton donor role is filled by Glu-3. Lys-60 (proton donor; for beta-elimination activity) is an active-site residue. The DNA site is built by His-93 and Arg-112. An FPG-type zinc finger spans residues 240-274; the sequence is NVYGKKGEPCVTCGTILEKTVVGGRGTHYCPICQP. Arg-264 functions as the Proton donor; for delta-elimination activity in the catalytic mechanism.

The protein belongs to the FPG family. In terms of assembly, monomer. The cofactor is Zn(2+).

The catalysed reaction is Hydrolysis of DNA containing ring-opened 7-methylguanine residues, releasing 2,6-diamino-4-hydroxy-5-(N-methyl)formamidopyrimidine.. It catalyses the reaction 2'-deoxyribonucleotide-(2'-deoxyribose 5'-phosphate)-2'-deoxyribonucleotide-DNA = a 3'-end 2'-deoxyribonucleotide-(2,3-dehydro-2,3-deoxyribose 5'-phosphate)-DNA + a 5'-end 5'-phospho-2'-deoxyribonucleoside-DNA + H(+). Its function is as follows. Involved in base excision repair of DNA damaged by oxidation or by mutagenic agents. Acts as a DNA glycosylase that recognizes and removes damaged bases. Has a preference for oxidized purines, such as 7,8-dihydro-8-oxoguanine (8-oxoG). Has AP (apurinic/apyrimidinic) lyase activity and introduces nicks in the DNA strand. Cleaves the DNA backbone by beta-delta elimination to generate a single-strand break at the site of the removed base with both 3'- and 5'-phosphates. This Bacillus cereus (strain ATCC 10987 / NRS 248) protein is Formamidopyrimidine-DNA glycosylase.